A 202-amino-acid polypeptide reads, in one-letter code: Small heat shock protein hspG5 (202 aa).

Residues K31–N202 enclose the sHSP domain. The disordered stretch occupies residues T96 to N138.

It belongs to the small heat shock protein (HSP20) family.

This chain is Small heat shock protein hspG5 (hspG5), found in Dictyostelium discoideum (Social amoeba).